Reading from the N-terminus, the 512-residue chain is MMLSEQAQKWFPTHVQVTVLQAKDLKPKGKSGTNDTYTIIQLGKEKYSTSVAEKTLEPVWKEEASFELPGLLMQGSPEKYILFLIVMHRSLVGLDKFLGQVAINLNDIFEDKQRRKTEWFRLESKQGKRIKNRGEIKVNIQFMRNNMTASMFDLSMKDKTRSPFAKLKDKMKGRKSDGVFSDTSSAIVPSTHMPDANPEFSSGEMQMKSKPKKPFLLGPQRLSSAHSMSDLTGSHLSSEKLKSSTVGPTHLLSRQIDSFGVVPESGSLKSPHRRTLSFDTSKLNQPGSIVDEGEHSFGRQSDPFTNVTASLPQKFATLPRKKNPFEESSEPWDSSMNLFSKPIEVRKESKREKREKVSLFERVTGKRDSRRPDKLNNGGSDSPCDLKSPSAFSENRQDYFEYESTNPFTAKFRASTIMPSSSFHVNPTSSEDLRKIPDNNPFDATAGYRSLTYEEVLQELVKHKELLRRKDTHIRELEDYIDNLLVRVMEETPSILRVPYEPSRKAGKFTNS.

A C2 domain is found at 1–120; it reads MMLSEQAQKW…DKQRRKTEWF (120 aa). A necessary for its cellular translocation to the plasma membrane region spans residues 15–102; sequence VQVTVLQAKD…GLDKFLGQVA (88 aa). 2 disordered regions span residues 174–231 and 263–287; these read RKSD…MSDL and PESG…NQPG. 2 stretches are compositionally biased toward polar residues: residues 221 to 231 and 277 to 287; these read RLSSAHSMSDL and SFDTSKLNQPG. S227 carries the post-translational modification Phosphoserine; by MARK2. S277 is modified (phosphoserine). The NPF 1 motif lies at 323–325; that stretch reads NPF. The span at 347–374 shows a compositional bias: basic and acidic residues; it reads KESKREKREKVSLFERVTGKRDSRRPDK. A disordered region spans residues 347–390; sequence KESKREKREKVSLFERVTGKRDSRRPDKLNNGGSDSPCDLKSPS. 2 short sequence motifs (NPF) span residues 406–408 and 440–442; these read NPF. In terms of domain architecture, FIP-RBD spans 437-499; it reads PDNNPFDATA…EETPSILRVP (63 aa). Residues 465–512 are necessary for interaction with AP2A1, RAB11A, subcellular location, endocytosis activity and homooligomerization; it reads ELLRRKDTHIRELEDYIDNLLVRVMEETPSILRVPYEPSRKAGKFTNS.

In terms of assembly, homooligomerizes in a Rab11-independent manner. Forms a heterooligomeric complex with RAB11FIP4. Interacts with AP2A1, MYO5B, RAB25 and REPS1. Interacts with RAB11A and RAB11B (activated GTP-bound form). Interacts with NPC1L1. Interacts (via NPF motifs) with EHD1 and EHD3. Interacts with TICAM2; this interaction directs RAB11FIP2 to the phagosome. Interacts with RAB14 and RAB25 (GTP-bound forms). Phosphorylation at Ser-227 by MARK2 regulates epithelial cell polarity.

The protein localises to the cell membrane. Its subcellular location is the recycling endosome membrane. Functionally, a Rab11 effector binding preferentially phosphatidylinositol 3,4,5-trisphosphate (PtdInsP3) and phosphatidic acid (PA) and acting in the regulation of the transport of vesicles from the endosomal recycling compartment (ERC) to the plasma membrane. Involved in insulin granule exocytosis. Also involved in receptor-mediated endocytosis and membrane trafficking of recycling endosomes, probably originating from clathrin-coated vesicles. Required in a complex with MYO5B and RAB11 for the transport of NPC1L1 to the plasma membrane. Also acts as a regulator of cell polarity. Plays an essential role in phagocytosis through a mechanism involving TICAM2, RAC1 and CDC42 Rho GTPases for controlling actin-dynamics. This Mus musculus (Mouse) protein is Rab11 family-interacting protein 2 (Rab11fip2).